The following is a 562-amino-acid chain: Phosphoglucomutase-1 (562 aa).

Methionine 1 is modified (N-acetylmethionine). Position 16 is an N6-acetyllysine (lysine 16). Arginine 23 is a binding site for alpha-D-glucose 1,6-bisphosphate. Threonine 115 bears the Phosphothreonine mark. Serine 117 provides a ligand contact to alpha-D-glucose 1,6-bisphosphate. Serine 117 (phosphoserine intermediate) is an active-site residue. Serine 117 lines the Mg(2+) pocket. Residues serine 117 and serine 134 each carry the phosphoserine modification. A Phosphothreonine modification is found at threonine 185. A phosphoserine mark is found at serine 206 and serine 213. Mg(2+) contacts are provided by aspartate 288, aspartate 290, and aspartate 292. Alpha-D-glucose 1,6-bisphosphate contacts are provided by aspartate 292 and arginine 293. Lysine 349 is subject to N6-acetyllysine. Tyrosine 353 is modified (phosphotyrosine). Residue threonine 357 participates in alpha-D-glucose 1,6-bisphosphate binding. At serine 369 the chain carries Phosphoserine. Glutamate 376, serine 378, and lysine 389 together coordinate alpha-D-glucose 1,6-bisphosphate. At serine 378 the chain carries Phosphoserine. At lysine 419 the chain carries N6-succinyllysine. Threonine 467 is subject to Phosphothreonine; by PAK1. Phosphoserine is present on residues serine 477, serine 485, and serine 505. The residue at position 507 (threonine 507) is a Phosphothreonine. 2 positions are modified to phosphoserine: serine 509 and serine 541.

Belongs to the phosphohexose mutase family. Monomer. Mg(2+) is required as a cofactor. Post-translationally, phosphorylation at Thr-467 by PAK1 significantly enhances enzymatic activity.

The protein localises to the cytoplasm. The catalysed reaction is alpha-D-glucose 1-phosphate = alpha-D-glucose 6-phosphate. It catalyses the reaction O-phospho-L-seryl-[protein] + alpha-D-glucose 1-phosphate = alpha-D-glucose 1,6-bisphosphate + L-seryl-[protein]. The enzyme catalyses alpha-D-glucose 1,6-bisphosphate + L-seryl-[protein] = O-phospho-L-seryl-[protein] + alpha-D-glucose 6-phosphate. Catalyzes the reversible isomerization of alpha-D-glucose 1-phosphate to alpha-D-glucose 6-phosphate. The mechanism proceeds via the intermediate compound alpha-D-glucose 1,6-bisphosphate. This enzyme participates in both the breakdown and synthesis of glucose. This chain is Phosphoglucomutase-1 (PGM1), found in Macaca fascicularis (Crab-eating macaque).